Consider the following 151-residue polypeptide: 3-hydroxyacyl-thioester dehydratase Z (151 aa).

The region spanning 11–131 (AAAAGEKVGQ…TVQATVSTTV (121 aa)) is the MaoC-like domain. Substrate is bound by residues 60 to 63 (IAHG), 86 to 89 (AINY), 97 to 99 (PAP), glutamine 124, and arginine 148.

It belongs to the enoyl-CoA hydratase/isomerase family. Homodimer.

The enzyme catalyses a (3R)-3-hydroxyacyl-CoA = a (2E)-enoyl-CoA + H2O. Functionally, shows trans-enoyl-CoA hydratase/3-hydroxyacyl-CoA dehydratase activity. The polypeptide is 3-hydroxyacyl-thioester dehydratase Z (Mycobacterium bovis (strain ATCC BAA-935 / AF2122/97)).